A 216-amino-acid polypeptide reads, in one-letter code: Cytochrome c-type protein Cgr1 (216 aa).

Residues 18 to 38 traverse the membrane as a helical segment; it reads WPIVVGVVVVVLIAAGAGFWV. Heme is bound by residues cysteine 46, cysteine 50, histidine 51, cysteine 95, cysteine 98, histidine 99, cysteine 142, cysteine 147, histidine 148, cysteine 176, cysteine 179, histidine 180, cysteine 190, cysteine 193, and histidine 194.

Belongs to the multiheme cytochrome c family. In terms of assembly, may form a membrane-associated complex with Cgr2. In terms of processing, binds 5 heme groups per subunit.

The protein resides in the cell membrane. Functionally, probably transfers electrons from a membrane-associated electron donor (e.g. the membrane quinone pool) to the [4Fe-4S] cluster of the Cgr2 reductase via its covalently bound heme groups. In Eggerthella lenta (strain ATCC 25559 / DSM 2243 / CCUG 17323 / JCM 9979 / KCTC 3265 / NCTC 11813 / VPI 0255 / 1899 B) (Eubacterium lentum), this protein is Cytochrome c-type protein Cgr1.